Consider the following 460-residue polypeptide: Orexin receptor type 2 (460 aa).

Residues 1-54 (MSSTKLEDSLSRRNWSSASELNETQEPFLNPTDYDDEEFLRYLWREYLHPKEYE) lie on the Extracellular side of the membrane. Residues Asn-14 and Asn-22 are each glycosylated (N-linked (GlcNAc...) asparagine). The tract at residues 33 to 49 (DYDDEEFLRYLWREYLH) is required for response to orexin-A. A helical transmembrane segment spans residues 55–75 (WVLIAGYIIVFVVALIGNVLV). At 76 to 88 (CVAVWKNHHMRTV) the chain is on the cytoplasmic side. A helical membrane pass occupies residues 89-110 (TNYFIVNLSLADVLVTITCLPA). Residues 111–127 (TLVVDITETWFFGQSLC) lie on the Extracellular side of the membrane. An intrachain disulfide couples Cys-127 to Cys-210. Residues 128–150 (KVIPYLQTVSVSVSVLTLSCIAL) form a helical membrane-spanning segment. Topologically, residues 151 to 170 (DRWYAICHPLMFKSTAKRAR) are cytoplasmic. Residues 171-191 (NSIVVIWIVSCIIMIPQAIVM) traverse the membrane as a helical segment. Residues 192–222 (ECSSMLPGLANKTTLFTVCDEHWGGEVYPKM) lie on the Extracellular side of the membrane. Asn-202 carries N-linked (GlcNAc...) asparagine glycosylation. A helical membrane pass occupies residues 223-243 (YHICFFLVTYMAPLCLMILAY). Residues 244–304 (LQIFRKLWCR…QIRARRKTAR (61 aa)) are Cytoplasmic-facing. Residues 305 to 326 (MLMVVLLVFAICYLPISILNVL) form a helical membrane-spanning segment. Topologically, residues 327-342 (KRVFGMFTHTEDRETV) are extracellular. A helical transmembrane segment spans residues 343–366 (YAWFTFSHWLVYANSAANPIIYNF). At 367–460 (LSGKFREEFK…SSLLSTWLEV (94 aa)) the chain is on the cytoplasmic side.

The protein belongs to the G-protein coupled receptor 1 family. Widely expressed. Isoform 2 not detected in skeletal muscle and kidney.

Its subcellular location is the cell membrane. In terms of biological role, nonselective, high-affinity receptor for both orexin-A and orexin-B neuropeptides. Triggers an increase in cytoplasmic Ca(2+) levels in response to orexin-A binding. The protein is Orexin receptor type 2 (Hcrtr2) of Mus musculus (Mouse).